The following is a 403-amino-acid chain: GTPase Obg (403 aa).

Residues M1–L159 enclose the Obg domain. The OBG-type G domain occupies A160–I333. Residues G166–S173, F191–V195, D213–G216, N283–D286, and S314–A316 contribute to the GTP site. Mg(2+) is bound by residues S173 and T193. Positions Y364–P403 are disordered. Over residues Q365–I397 the composition is skewed to acidic residues.

Belongs to the TRAFAC class OBG-HflX-like GTPase superfamily. OBG GTPase family. In terms of assembly, monomer. The cofactor is Mg(2+).

The protein localises to the cytoplasm. Its function is as follows. An essential GTPase which binds GTP, GDP and possibly (p)ppGpp with moderate affinity, with high nucleotide exchange rates and a fairly low GTP hydrolysis rate. Plays a role in control of the cell cycle, stress response, ribosome biogenesis and in those bacteria that undergo differentiation, in morphogenesis control. This Haemophilus influenzae (strain PittGG) protein is GTPase Obg.